We begin with the raw amino-acid sequence, 486 residues long: Nucleolar GTP-binding protein 2 (486 aa).

The tract at residues 1–20 is disordered; sequence MGTGKKEKSRRIREGDTKDG. 3 positions are modified to phosphoserine: serine 60, serine 85, and serine 155. A CP-type G domain is found at 212-373; that stretch reads WNELYKVIDS…LIDCPGIVPP (162 aa). GTP is bound by residues 322–329 and 366–370; these read GYPNTGKS and DCPGI.

The protein belongs to the TRAFAC class YlqF/YawG GTPase family. NOG2 subfamily.

Its subcellular location is the nucleus. It is found in the nucleolus. In terms of biological role, GTPase that associates with pre-60S ribosomal subunits in the nucleolus and is required for their nuclear export and maturation. The protein is Nucleolar GTP-binding protein 2 (NOG2) of Saccharomyces cerevisiae (strain ATCC 204508 / S288c) (Baker's yeast).